The following is a 231-amino-acid chain: LexA repressor (231 aa).

The segment at residues 28-48 (IREIGEALDIRSTNGVNDHLK) is a DNA-binding region (H-T-H motif). Active-site for autocatalytic cleavage activity residues include Ser-149 and Lys-186.

This sequence belongs to the peptidase S24 family. Homodimer.

The catalysed reaction is Hydrolysis of Ala-|-Gly bond in repressor LexA.. Its function is as follows. Represses a number of genes involved in the response to DNA damage (SOS response), including recA and lexA. In the presence of single-stranded DNA, RecA interacts with LexA causing an autocatalytic cleavage which disrupts the DNA-binding part of LexA, leading to derepression of the SOS regulon and eventually DNA repair. The sequence is that of LexA repressor from Anaeromyxobacter sp. (strain Fw109-5).